Reading from the N-terminus, the 260-residue chain is Dynein regulatory complex subunit 6 (260 aa).

Residues 1–13 are compositionally biased toward basic residues; sequence MAPKKKGGGKKKK. The segment at 1–43 is disordered; sequence MAPKKKGGGKKKKKDDGAEPPHDGSWERAVESGTWEKPVTDLP. Positions 14-30 are enriched in basic and acidic residues; sequence KDDGAEPPHDGSWERAV.

This sequence belongs to the DRC6 family. As to quaternary structure, component of the nexin-dynein regulatory complex (N-DRC).

The protein resides in the cytoplasm. It is found in the cytoskeleton. The protein localises to the flagellum axoneme. Its function is as follows. Component of the nexin-dynein regulatory complex (N-DRC), a key regulator of ciliary/flagellar motility which maintains the alignment and integrity of the distal axoneme and regulates microtubule sliding in motile axonemes. In Chlamydomonas reinhardtii (Chlamydomonas smithii), this protein is Dynein regulatory complex subunit 6.